Reading from the N-terminus, the 109-residue chain is A-type ATP synthase subunit F (109 aa).

Belongs to the V-ATPase F subunit family. As to quaternary structure, has multiple subunits with at least A(3), B(3), C, D, E, F, H, I and proteolipid K(x).

It localises to the cell membrane. Component of the A-type ATP synthase that produces ATP from ADP in the presence of a proton gradient across the membrane. The chain is A-type ATP synthase subunit F from Haloquadratum walsbyi (strain DSM 16790 / HBSQ001).